Consider the following 264-residue polypeptide: uncharacterized protein (264 aa).

A signal peptide spans 1-21; that stretch reads MMWNYFVTCIVLYANIISIHT. Positions 182–247 are disordered; it reads QQPNAAQVPT…AANNGLDLTS (66 aa). Over residues 190-213 the composition is skewed to low complexity; it reads PTTSQQQPTSNTGGQQPPTNASNP. Residue N209 is glycosylated (N-linked (GlcNAc...) asparagine). Residues 214-226 are compositionally biased toward pro residues; the sequence is PTNPQPTPTPAQP. The segment covering 230 to 247 has biased composition (polar residues); sequence GTQVQQTPAANNGLDLTS.

As to expression, component of the acid-insoluble and acid-soluble organic matrix of calcified layers of the shell (at protein level).

The protein resides in the secreted. This is an uncharacterized protein from Lottia gigantea (Giant owl limpet).